A 378-amino-acid polypeptide reads, in one-letter code: Ribosomal RNA large subunit methyltransferase G (378 aa).

The protein belongs to the methyltransferase superfamily. RlmG family.

Its subcellular location is the cytoplasm. It catalyses the reaction guanosine(1835) in 23S rRNA + S-adenosyl-L-methionine = N(2)-methylguanosine(1835) in 23S rRNA + S-adenosyl-L-homocysteine + H(+). In terms of biological role, specifically methylates the guanine in position 1835 (m2G1835) of 23S rRNA. The chain is Ribosomal RNA large subunit methyltransferase G from Escherichia coli O9:H4 (strain HS).